Here is a 377-residue protein sequence, read N- to C-terminus: Mitochondrial pyrimidine nucleotide transporter RIM2 (377 aa).

Solcar repeat units follow at residues 50-163 (VKPW…TKDM), 173-262 (ETPM…MKRL), and 286-375 (KEWC…VIRL). The next 6 helical transmembrane spans lie at 53-73 (WVHFVAGGIGGMAGAVVTCPF), 131-151 (GFRSLFKGLGPNLVGVIPARS), 179-199 (LMAAATAGWATATATNPIWLI), 238-258 (GLSASYLGSVEGILQWLLYEQ), 286-306 (KEWCQRSGSAGLAKFVASIAT), and 347-368 (MYSGLTPHLMRTVPNSIIMFGT).

Belongs to the mitochondrial carrier (TC 2.A.29) family.

The protein localises to the mitochondrion inner membrane. The catalysed reaction is 5-methyl-UTP(out) + UTP(in) = 5-methyl-UTP(in) + UTP(out). Functionally, mitochondrial transporter that imports/exports pyrimidine nucleotides into and from mitochondria. Selectively transports uridine, thymidine, and cytosine (deoxy)nucleoside di- and triphosphates by an antiport mechanism. Also transports, with lower efficiency, uridine, thymidine, and cytosine (deoxy)nucleoside monophosphates as well as guanosine (deoxy)nucleoside di- and triphosphate. May import (deoxy)nucleoside triphosphates in exchange for intramitochondrial (deoxy)nucleoside monophosphates, thus providing precursors necessary for de novo synthesis of mitochondrial DNA and RNA while exporting products of their catabolism. Mediates the transport of iron and other divalent metal ions like copper and zinc across the mitochondrial inner membrane in a pyrimidine nucleotide-dependent fashion. Catalyzes the co-import of pyrimidine nucleotides and divalent metal ions including ferrous iron. Participates in mitochondrial genome maintenance, regulation of mitochondrial membrane potential and mitochondrial respiration. The protein is Mitochondrial pyrimidine nucleotide transporter RIM2 (RIM2) of Saccharomyces cerevisiae (strain ATCC 204508 / S288c) (Baker's yeast).